Reading from the N-terminus, the 514-residue chain is tRNA-2-methylthio-N(6)-dimethylallyladenosine synthase (514 aa).

The MTTase N-terminal domain occupies 68 to 186 (RTFLIKTYGC…LPEILEEAYL (119 aa)). Residues Cys-77, Cys-113, Cys-147, Cys-223, Cys-227, and Cys-230 each coordinate [4Fe-4S] cluster. The 231-residue stretch at 209–439 (RDGHIKAWVN…NKKVGIYSQQ (231 aa)) folds into the Radical SAM core domain. One can recognise a TRAM domain in the interval 442–505 (SQYEGKIVTV…QYSLNGTFIQ (64 aa)).

Belongs to the methylthiotransferase family. MiaB subfamily. In terms of assembly, monomer. Requires [4Fe-4S] cluster as cofactor.

It localises to the cytoplasm. The catalysed reaction is N(6)-dimethylallyladenosine(37) in tRNA + (sulfur carrier)-SH + AH2 + 2 S-adenosyl-L-methionine = 2-methylsulfanyl-N(6)-dimethylallyladenosine(37) in tRNA + (sulfur carrier)-H + 5'-deoxyadenosine + L-methionine + A + S-adenosyl-L-homocysteine + 2 H(+). Functionally, catalyzes the methylthiolation of N6-(dimethylallyl)adenosine (i(6)A), leading to the formation of 2-methylthio-N6-(dimethylallyl)adenosine (ms(2)i(6)A) at position 37 in tRNAs that read codons beginning with uridine. The chain is tRNA-2-methylthio-N(6)-dimethylallyladenosine synthase from Staphylococcus epidermidis (strain ATCC 35984 / DSM 28319 / BCRC 17069 / CCUG 31568 / BM 3577 / RP62A).